The following is an 82-amino-acid chain: Small ribosomal subunit protein bS16 (82 aa).

The protein belongs to the bacterial ribosomal protein bS16 family.

This chain is Small ribosomal subunit protein bS16, found in Klebsiella pneumoniae (strain 342).